Reading from the N-terminus, the 458-residue chain is N-acetylgalactosamine kinase (458 aa).

The alpha-D-galactose site is built by Arg43, Glu49, His50, and Asp52. Positions 143, 145, and 146 each coordinate ATP. Asp190 serves as a coordination point for alpha-D-galactose. The active-site Proton acceptor is Asp190. Residues Asn233 and Lys234 each contribute to the ATP site.

It belongs to the GHMP kinase family. GalK subfamily. As to quaternary structure, monomer.

It catalyses the reaction N-acetyl-alpha-D-galactosamine + ATP = N-acetyl-alpha-D-galactosamine 1-phosphate + ADP + H(+). Functionally, acts on GalNAc. Also acts as a galactokinase when galactose is present at high concentrations. May be involved in a salvage pathway for the reutilization of free GalNAc derived from the degradation of complex carbohydrates. The polypeptide is N-acetylgalactosamine kinase (GALK2) (Homo sapiens (Human)).